The primary structure comprises 153 residues: Insulin-like growth factor 1 (153 aa).

The segment at 49-77 (GPETLCGAELVDALQFVCGDRGFYFSKPT) is b. Disulfide bonds link cysteine 54/cysteine 96, cysteine 66/cysteine 109, and cysteine 95/cysteine 100. Residues 78-89 (GYGSSSRRLHHK) form a c region. The tract at residues 90–110 (GIVDECCFQSCDLRRLEMYCA) is a. The tract at residues 111-118 (PIKPPKSA) is d. Residues 119-153 (RSVRAQRHTDMPKAQKEVHLKNTSRGNTGNRNYRM) constitute a propeptide, e peptide. A disordered region spans residues 119 to 153 (RSVRAQRHTDMPKAQKEVHLKNTSRGNTGNRNYRM). Residues 125–138 (RHTDMPKAQKEVHL) show a composition bias toward basic and acidic residues. Residues 139-153 (KNTSRGNTGNRNYRM) are compositionally biased toward polar residues.

The protein belongs to the insulin family. As to quaternary structure, forms a ternary complex with IGFR1 and ITGAV:ITGB3. Forms a ternary complex with IGFR1 and ITGA6:ITGB4. Forms a ternary complex with IGFBP3 and ALS.

Its subcellular location is the secreted. Its function is as follows. The insulin-like growth factors, isolated from plasma, are structurally and functionally related to insulin but have a much higher growth-promoting activity. Acts as a ligand for IGF1R. Binds to the alpha subunit of IGF1R, leading to the activation of the intrinsic tyrosine kinase activity which autophosphorylates tyrosine residues in the beta subunit thus initiatiating a cascade of down-stream signaling events leading to activation of the PI3K-AKT/PKB and the Ras-MAPK pathways. Binds to integrins. Its binding to integrins and subsequent ternary complex formation with integrins and IGFR1 are essential for IGF1 signaling. This chain is Insulin-like growth factor 1, found in Gallus gallus (Chicken).